We begin with the raw amino-acid sequence, 257 residues long: Putative hydro-lyase Bcenmc03_3969 (257 aa).

Belongs to the D-glutamate cyclase family.

This is Putative hydro-lyase Bcenmc03_3969 from Burkholderia orbicola (strain MC0-3).